The primary structure comprises 461 residues: MSHHSETILTAILNTKYLENGSKHKIIELPKTNIKKLIKDFLSVNSNKKIQSDCVLINYFPNALLLDNPNKNSSVKKEQTNQVKIIEKPITNNINKPEDIWDIIDNMDKENNSESLENIQSENSENNDNFTDNNTKKSPTKSRICSGCGSKGTLLEDQSSSVLVCSECGMINDDLLDHGPEWRQYYNDDGRGEGVNRCGCPSNFFFPKSSQGTILAGTGSGRLKRKQKWNSTVYKERSLNDVFEKISTICSKSNIPRIIADTAKILYKKLSDCKHKSGNNVGKQIIIRGHNRISIIAACIYKACEMNKNPRTVKEIARFFGIDEKKVTKGNKQFEKIMKNTDDNMIILDPVNSNSTEDYIRRHCPRLKVNKDHTDIAVKISNNCCRMKLASDHNPQSIAAGAILVMVVFCELNIDKRKISRLFGISDVTIDKIYKKIAPYAPALVDDGATDHLINKLKING.

Residues 113–142 (SESLENIQSENSENNDNFTDNNTKKSPTKS) are disordered. A compositionally biased stretch (low complexity) spans 121–137 (SENSENNDNFTDNNTKK). Residues 141-173 (KSRICSGCGSKGTLLEDQSSSVLVCSECGMIND) form a TFIIB-type zinc finger. Cysteine 145, cysteine 165, and cysteine 168 together coordinate Zn(2+). 2 tandem repeats follow at residues 246 to 327 (ISTI…EKKV) and 360 to 430 (IRRH…DVTI).

The protein belongs to the TFIIB family.

This is Putative transcription initiation factor IIB-like protein from Acanthamoeba polyphaga mimivirus (APMV).